The following is a 264-amino-acid chain: Large ribosomal subunit protein uL2 (264 aa).

The protein belongs to the universal ribosomal protein uL2 family.

It localises to the cytoplasm. In Tetrahymena thermophila (strain SB210), this protein is Large ribosomal subunit protein uL2 (RPL8).